We begin with the raw amino-acid sequence, 335 residues long: Glycerol-3-phosphate dehydrogenase [NAD(P)+] (335 aa).

The NADPH site is built by Ser10, Phe11, Arg31, and Lys105. Sn-glycerol 3-phosphate-binding residues include Lys105, Gly136, and Ser138. Ala140 lines the NADPH pocket. Residues Lys191, Asp244, Ser254, Arg255, and Asn256 each contribute to the sn-glycerol 3-phosphate site. The active-site Proton acceptor is Lys191. Arg255 provides a ligand contact to NADPH. NADPH-binding residues include Val279 and Glu281.

The protein belongs to the NAD-dependent glycerol-3-phosphate dehydrogenase family.

Its subcellular location is the cytoplasm. The enzyme catalyses sn-glycerol 3-phosphate + NAD(+) = dihydroxyacetone phosphate + NADH + H(+). It carries out the reaction sn-glycerol 3-phosphate + NADP(+) = dihydroxyacetone phosphate + NADPH + H(+). The protein operates within membrane lipid metabolism; glycerophospholipid metabolism. Catalyzes the reduction of the glycolytic intermediate dihydroxyacetone phosphate (DHAP) to sn-glycerol 3-phosphate (G3P), the key precursor for phospholipid synthesis. The protein is Glycerol-3-phosphate dehydrogenase [NAD(P)+] of Leptospira interrogans serogroup Icterohaemorrhagiae serovar copenhageni (strain Fiocruz L1-130).